The following is a 212-amino-acid chain: 2-hydroxychromene-2-carboxylate isomerase (212 aa).

S24 (nucleophile) is an active-site residue. Position 24 (S24) interacts with glutathione. Residues K56, 66–67 (NR), and Y97 each bind substrate. Glutathione contacts are provided by residues V181 and 192-195 (WGND).

Belongs to the GST superfamily. NadH family. Glutathione serves as cofactor.

It carries out the reaction 2-hydroxychromene-2-carboxylate = (3E)-4-(2-hydroxyphenyl)-2-oxobut-3-enoate. Its pathway is aromatic compound metabolism; naphthalene degradation. Functionally, involved in the naphthalene catabolic pathway. Catalyzes the reversible glutathione-dependent isomerization of 2-hydroxychromene-2-carboxylate (HCCA) to trans-O-hydroxybenzylidenepyruvate (THBPA). This chain is 2-hydroxychromene-2-carboxylate isomerase (doxJ), found in Pseudomonas sp. (strain C18).